Here is a 517-residue protein sequence, read N- to C-terminus: Cytochrome P450 CYP72A616 (517 aa).

A helical transmembrane segment spans residues 5–25; sequence VLGALAALLAAAAAWVMRAAA. Cys465 contributes to the heme binding site.

It belongs to the cytochrome P450 family. Mainly expressed in leaves and, at low levels, in roots, fruits and stems.

It localises to the membrane. It participates in steroid metabolism; cholesterol metabolism. In terms of biological role, involved in the biosynthesis of spiroketal steroid and saponin natural products from cholesterol such as diosgenin and analogs (e.g. furostanol and spirostanol), plant defense compounds used as main precursors for the industrial production of steroid hormones. During the 5,6-spiroketalization of cholesterol, may catalyze the 27-monohydroxylation of furostanol-type steroid to an intermediate product that undergoes a stereospecific formation of the terminal heterocycle to yield diosgenin. The protein is Cytochrome P450 CYP72A616 of Paris polyphylla (Daiswa polyphylla).